A 447-amino-acid chain; its full sequence is UDP-N-acetylmuramate--L-alanine ligase (447 aa).

108–114 (GSHGKTS) contacts ATP.

This sequence belongs to the MurCDEF family.

Its subcellular location is the cytoplasm. It catalyses the reaction UDP-N-acetyl-alpha-D-muramate + L-alanine + ATP = UDP-N-acetyl-alpha-D-muramoyl-L-alanine + ADP + phosphate + H(+). The protein operates within cell wall biogenesis; peptidoglycan biosynthesis. Functionally, cell wall formation. This chain is UDP-N-acetylmuramate--L-alanine ligase, found in Listeria monocytogenes serotype 4a (strain HCC23).